Here is a 938-residue protein sequence, read N- to C-terminus: Protocadherin gamma-C4 (938 aa).

Residues 1-29 (MLRKVRSWTEIWRWATLLFLFYHLGYVCG) form the signal peptide. Cadherin domains follow at residues 30–133 (QIRY…APRF), 134–242 (PRQQ…APAF), 243–350 (QQSS…APYI), 351–455 (TVTS…PPSF), 456–565 (FQRS…APAV), and 572–676 (PGSL…VPDL). Over 30 to 692 (QIRYPVPEES…REGESRLTLY (663 aa)) the chain is Extracellular. Asparagine 265, asparagine 276, and asparagine 444 each carry an N-linked (GlcNAc...) asparagine glycan. The helical transmembrane segment at 693–713 (LAVSLVAICFVSFGSFVALLS) threads the bilayer. The Cytoplasmic portion of the chain corresponds to 714-938 (KCLRGAACGV…KKKSGKKEKK (225 aa)). Disordered stretches follow at residues 791-847 (PSAP…WPNN) and 908-938 (ATLT…KEKK). The segment covering 822 to 847 (WRFSQAQRPGTSGSQNGDDTGTWPNN) has biased composition (polar residues). Residues 928 to 938 (NKKKSGKKEKK) show a composition bias toward basic residues.

It localises to the cell membrane. Its function is as follows. Potential calcium-dependent cell-adhesion protein. May be involved in the establishment and maintenance of specific neuronal connections in the brain. The protein is Protocadherin gamma-C4 (PCDHGC4) of Homo sapiens (Human).